The chain runs to 390 residues: Homeobox protein Meis1 (390 aa).

The MEIS N-terminal domain occupies 108–192 (GGDVCSSESF…IDLVIDDREG (85 aa)). Residues 190–202 (REGGSKSDSEDVT) are compositionally biased toward basic and acidic residues. Positions 190–279 (REGGSKSDSE…KKRHKKRGIF (90 aa)) are disordered. A compositionally biased stretch (polar residues) spans 203 to 213 (RSANLTDQPSW). Positions 272-334 (RHKKRGIFPK…NARRRIVQPM (63 aa)) form a DNA-binding region, homeobox; TALE-type. The tract at residues 299–329 (YPSEEQKKQLAQDTGLTILQVNNWFINARRR) is interaction with DNA. Residues 335 to 390 (IDQSNRAVSQGTPYNPDGQPMGGFVMDGQQHMGIRAPGPMSGMGMNMGMEGQWHYM) form a required for transcriptional activation region.

This sequence belongs to the TALE/MEIS homeobox family. Interacts with the N-terminal region of PBX1 to form a heterodimer which binds DNA including a cAMP-responsive sequence in CYP17. Also forms heterodimers with PBX2. Forms heterotrimers with PBX1 or PBX2 and a number of HOX proteins including HOXA9, HOXD4 and HOXD9 where it acts as a non-DNA-binding partner. Also forms heterotrimers with PBX1 and HOX proteins including HOXD9 and HOXD10 where PBX1 is the non-DNA-binding partner. Heterodimer with DLX3. Heterodimer with HOXB13. Expressed at high levels in the lung with lower levels detected in the heart and brain. Expressed in pancreatic islets (beta-cells and non-beta-cells).

It localises to the nucleus. Functionally, acts as a transcriptional regulator of PAX6. Also acts as a transcriptional activator of PF4 in complex with PBX1 or PBX2. Required for hematopoiesis, megakaryocyte lineage development and vascular patterning. May function as a cofactor for HOXA7 and HOXA9 in the induction of myeloid leukemias. The chain is Homeobox protein Meis1 (Meis1) from Mus musculus (Mouse).